The primary structure comprises 80 residues: Tripartite terminase subunit 2 (80 aa).

This sequence belongs to the herpesviridae TRM2 protein family. In terms of assembly, associates with TRM1 and TRM3 to form the tripartite terminase complex.

The protein localises to the host nucleus. Component of the molecular motor that translocates viral genomic DNA in empty capsid during DNA packaging. Forms a tripartite terminase complex together with TRM1 and TRM3 in the host cytoplasm. Once the complex reaches the host nucleus, it interacts with the capsid portal vertex. This portal forms a ring in which genomic DNA is translocated into the capsid. The polypeptide is Tripartite terminase subunit 2 (Homo sapiens (Human)).